The following is a 365-amino-acid chain: Mitogen-activated protein kinase HOG1A (365 aa).

Residues 24 to 303 (YTDLQPVGMG…AADALAHPYL (280 aa)) form the Protein kinase domain. ATP contacts are provided by residues 30 to 38 (VGMGAFGLL) and lysine 53. Aspartate 145 acts as the Proton acceptor in catalysis. Residue threonine 175 is modified to Phosphothreonine. A TXY motif is present at residues 175 to 177 (TGY). A Phosphotyrosine modification is found at tyrosine 177.

This sequence belongs to the protein kinase superfamily. Ser/Thr protein kinase family. MAP kinase subfamily. HOG1 sub-subfamily. The cofactor is Mg(2+). Post-translationally, phosphorylated. Dually phosphorylated on Thr-175 and Tyr-177, which activates the enzyme. Rapidly dephosphorylated upon either hypo- or hyperosmotic shock.

The protein localises to the cytoplasm. It is found in the nucleus. The catalysed reaction is L-seryl-[protein] + ATP = O-phospho-L-seryl-[protein] + ADP + H(+). The enzyme catalyses L-threonyl-[protein] + ATP = O-phospho-L-threonyl-[protein] + ADP + H(+). With respect to regulation, activated by tyrosine and threonine phosphorylation. In terms of biological role, proline-directed serine/threonine-protein kinase involved in a signal transduction pathway that is activated by changes in the osmolarity of the extracellular environment. Controls osmotic regulation of transcription of target genes. The protein is Mitogen-activated protein kinase HOG1A (HOG1A) of Wallemia ichthyophaga (strain EXF-994 / CBS 113033).